We begin with the raw amino-acid sequence, 959 residues long: MGLGWFGISSVWLLPMVWRYVARVMAGERGLKGPGTVRIWLATLAVLCASASLEALTSGRDLHGKAGGAVGRGLASLFGHMLGWTGAFLLMLGVLLWVAPMVFGHSWRQLLARLRQAGEAPPVQADARHDEADDGLKPTALGLGGAEQAMGSGHAGASRRHGIEAGSAWRQPAWQPPPRTRESPPQPGEIWPLLNAQGRPEMPLPVAAQPAPVPVPAPAATPKAATQAPSSRSALRATIVSSPFHRPQPSDGDQPPSSPEADDAPSAPVEDAAPAISPAAEPDAPASAPPEPAEPSPPTVDLEAVRQEAEALLAELRGLMTPLAAAPVASPEPEPEPEPEAETEVTPEAEAEPEAEPEAEAEPEAEAEAEAEAEAEPEAEAPAPESVAPALQEAEAATAAEAPLPAPEPAPAIEADDAAPPPPAVPAQKPRIVLPAVVGQVVSNAMPAPAPAAAPVAAAPPAPPRVVDYRLPNVALLTAASPDTVAVPAEHLEETSHLIAQRLAEFKVPVTVAGASAGPVITRFEVDPAIGVRGAQVVGLMKDLARALGVTSIRVVETIPGKTCMGLELPNARRAMIRLSEVVNAPDFQSHASHLVLAMGKDITGNPVVTDLARAPHLLVAGTTGSGKSVAVNAMILSMLYKATPEDVRLIMIDPKMLELSVYEGIPHLLAPVVTDMKQAAHALNWCVGEMEKRYRLMSALGVRNLAGYNQKIRAAQQAGHKVPNPFSLTPDAPEPLSTLPMIVVVIDELADLMMVAGKKIEELIARLAQKARAAGIHLILATQRPSVDVITGLIKANIPTRVAFQVSSKIDSRTILDQMGAETLLGQGDMLFLPPGTGYPQRVHGAFVADEEVHRVVEHWKQFGEPEYDEAILAGDPAEAAAGELFGEGGDAEADPLYDEAAAFVLNTRRASISAVQRQLRIGYNRAARLIEQMEAAGLVSPMGRNGSREVIAPGGGD.

3 helical membrane passes run 1-21 (MGLG…WRYV), 39-59 (IWLA…LTSG), and 83-103 (GWTG…PMVF). Residues 104-959 (GHSWRQLLAR…REVIAPGGGD (856 aa)) lie on the Cytoplasmic side of the membrane. The disordered stretch occupies residues 122 to 427 (PVQADARHDE…AAPPPPAVPA (306 aa)). A compositionally biased stretch (basic and acidic residues) spans 126-136 (DARHDEADDGL). Composition is skewed to low complexity over residues 220–229 (ATPKAATQAP) and 264–286 (APSA…DAPA). Pro residues predominate over residues 287–298 (SAPPEPAEPSPP). A compositionally biased stretch (acidic residues) spans 333-379 (PEPEPEPEAETEVTPEAEAEPEAEPEAEAEPEAEAEAEAEAEAEPEA). Positions 380–403 (EAPAPESVAPALQEAEAATAAEAP) are enriched in low complexity. The region spanning 605 to 814 (GNPVVTDLAR…FQVSSKIDSR (210 aa)) is the FtsK domain. 625–630 (GSGKSV) serves as a coordination point for ATP.

It belongs to the FtsK/SpoIIIE/SftA family. In terms of assembly, homohexamer. Forms a ring that surrounds DNA.

The protein localises to the cell inner membrane. Its function is as follows. Essential cell division protein that coordinates cell division and chromosome segregation. The N-terminus is involved in assembly of the cell-division machinery. The C-terminus functions as a DNA motor that moves dsDNA in an ATP-dependent manner towards the dif recombination site, which is located within the replication terminus region. Translocation stops specifically at Xer-dif sites, where FtsK interacts with the Xer recombinase, allowing activation of chromosome unlinking by recombination. FtsK orienting polar sequences (KOPS) guide the direction of DNA translocation. FtsK can remove proteins from DNA as it translocates, but translocation stops specifically at XerCD-dif site, thereby preventing removal of XerC and XerD from dif. The polypeptide is DNA translocase FtsK 1 (ftsK1) (Ralstonia nicotianae (strain ATCC BAA-1114 / GMI1000) (Ralstonia solanacearum)).